Consider the following 424-residue polypeptide: tRNA(Met) cytidine acetate ligase (424 aa).

ATP contacts are provided by residues 7–20 (ITEY…HLHH), glycine 102, asparagine 174, and arginine 199.

Belongs to the TmcAL family.

It is found in the cytoplasm. The enzyme catalyses cytidine(34) in elongator tRNA(Met) + acetate + ATP = N(4)-acetylcytidine(34) in elongator tRNA(Met) + AMP + diphosphate. Its function is as follows. Catalyzes the formation of N(4)-acetylcytidine (ac(4)C) at the wobble position of elongator tRNA(Met), using acetate and ATP as substrates. First activates an acetate ion to form acetyladenylate (Ac-AMP) and then transfers the acetyl group to tRNA to form ac(4)C34. The polypeptide is tRNA(Met) cytidine acetate ligase (Alkaliphilus metalliredigens (strain QYMF)).